We begin with the raw amino-acid sequence, 339 residues long: MQALVNKIWYQGHPLRWLLLPLSWLFAVITYVRRALFRLGIKSQTAMPVPVIVVGNITVGGSGKTPTVIYLIELLRQHGFTPGVISRGYGVDIQGVRTVNLGASAVEVGDEPAMIVARTQVPMVVGAKRVDAANALIAEFGVDVIICDDGLQHYALGRDIELVVIDGQRGLGNGLLLPAGPLREGAWRLDAVDFIVNNGGPAAKGQFEMQLAPTEVKPVKCDLTSGEYSFDKSQPLVAMAGIGNPARFFESLRAQGYQLALCQGFDDHQPYDKTQLRDLAQDLPLLMTEKDAVKCRDFAQENWWYLAVNAKLSPQFDEQLLARLREVAAAKQGNFHGIR.

58–65 (TVGGSGKT) contributes to the ATP binding site.

Belongs to the LpxK family.

The catalysed reaction is a lipid A disaccharide + ATP = a lipid IVA + ADP + H(+). Its pathway is glycolipid biosynthesis; lipid IV(A) biosynthesis; lipid IV(A) from (3R)-3-hydroxytetradecanoyl-[acyl-carrier-protein] and UDP-N-acetyl-alpha-D-glucosamine: step 6/6. Transfers the gamma-phosphate of ATP to the 4'-position of a tetraacyldisaccharide 1-phosphate intermediate (termed DS-1-P) to form tetraacyldisaccharide 1,4'-bis-phosphate (lipid IVA). The protein is Tetraacyldisaccharide 4'-kinase of Shewanella baltica (strain OS195).